The chain runs to 101 residues: Urease subunit beta (101 aa).

This sequence belongs to the urease beta subunit family. Heterotrimer of UreA (gamma), UreB (beta) and UreC (alpha) subunits. Three heterotrimers associate to form the active enzyme.

It localises to the cytoplasm. It catalyses the reaction urea + 2 H2O + H(+) = hydrogencarbonate + 2 NH4(+). It functions in the pathway nitrogen metabolism; urea degradation; CO(2) and NH(3) from urea (urease route): step 1/1. The protein is Urease subunit beta of Albidiferax ferrireducens (strain ATCC BAA-621 / DSM 15236 / T118) (Rhodoferax ferrireducens).